Here is an 804-residue protein sequence, read N- to C-terminus: Phenylalanine--tRNA ligase beta subunit (804 aa).

The region spanning P40–A153 is the tRNA-binding domain. Residues P400 to A476 form the B5 domain. The Mg(2+) site is built by D454, D460, E463, and E464. In terms of domain architecture, FDX-ACB spans S710–R802.

The protein belongs to the phenylalanyl-tRNA synthetase beta subunit family. Type 1 subfamily. In terms of assembly, tetramer of two alpha and two beta subunits. Mg(2+) serves as cofactor.

The protein resides in the cytoplasm. The catalysed reaction is tRNA(Phe) + L-phenylalanine + ATP = L-phenylalanyl-tRNA(Phe) + AMP + diphosphate + H(+). This Chlorobium luteolum (strain DSM 273 / BCRC 81028 / 2530) (Pelodictyon luteolum) protein is Phenylalanine--tRNA ligase beta subunit.